Reading from the N-terminus, the 176-residue chain is Avian agnoprotein 1a (176 aa).

Disordered regions lie at residues 1–85 and 116–176; these read MSTP…GKLE and VYAA…RPAR. The segment covering 75–85 has biased composition (basic and acidic residues); sequence YDRQNRFGKLE. Residues 76–119 adopt a coiled-coil conformation; it reads DRQNRFGKLESEIRETKSQLETLRQELKHLQADVDDLKETVYAA. A compositionally biased stretch (low complexity) spans 137 to 161; the sequence is TPTATTPEASPAAPTTESTETTGPS.

As to quaternary structure, interacts with VP1.

It is found in the virion. The protein localises to the host nucleus. This chain is Avian agnoprotein 1a, found in Budgerigar fledgling disease virus (BFPyV).